Consider the following 250-residue polypeptide: MAVLGLQGVRGGVGTTTITAALAWSLQMLGENVLVVDACPDNLLRLSFNVDFTHRQGWARAMLDGQDWRDAGLRYTSQLDLLPFGQLSIEEQENPQHWQTRLSDICSGLQQLKASGRYQWILIDLPRDASQITHQLLSLCDHSLAIVNVDANCHIRLHQQALPDGAHILINDFRIGSQVQDDIYQLWLQSQRRLLPMLIHRDEAMAECLAAKQPVGEYRSDALAAEEILTLANWCLLNYSGLKTPVGSAS.

Valine 9 to threonine 16 contributes to the ATP binding site.

This sequence belongs to the BcsQ family.

The protein localises to the cytoplasm. Essential for cellulose biosynthesis, shown for strain 1094, a commensal, natural cellulose producer. Also shown in strain W3110 which has a restored reading frame (TAG stop codon to TTG for amino acid 6, called strain AR3110), this protein. May play a role in subcellular localization of an active cellulose biosynthesis apparatus at the bacterial cell pole. The combination of cellulose and the curli fiber network confer cohesion, elasticity and tissue-like properties to colonies. This Escherichia coli (strain K12) protein is Cellulose biosynthesis protein BcsQ.